The sequence spans 123 residues: Large ribosomal subunit protein uL14 (123 aa).

The protein belongs to the universal ribosomal protein uL14 family. Part of the 50S ribosomal subunit. Forms a cluster with proteins L3 and L19. In the 70S ribosome, L14 and L19 interact and together make contacts with the 16S rRNA in bridges B5 and B8.

Binds to 23S rRNA. Forms part of two intersubunit bridges in the 70S ribosome. In Hamiltonella defensa subsp. Acyrthosiphon pisum (strain 5AT), this protein is Large ribosomal subunit protein uL14.